The chain runs to 525 residues: Ribonuclease III domain-containing protein RNC1, chloroplastic (525 aa).

The transit peptide at 1-28 (MGPPAMAFQALTLTPLPFSLHSSSRRVR) directs the protein to the chloroplast. 2 RNase III domains span residues 125-271 (LLEA…LCFG) and 403-503 (EHPR…CVYG).

As to quaternary structure, interacts with RNA. Part of large ribonucleo-protein particles that contain CAF1 and/or CAF2.

It is found in the plastid. It localises to the chloroplast stroma. Its function is as follows. Binds specific group II introns in chloroplasts and facilitates their splicing. Acts on both subgroup IIA and subgroup IIB introns. The substrates of the subgroup II also require the CRM domain proteins CAF1 or CAF2. Binds both single-stranded and double-stranded RNA non-specifically, but lacks endonuclease activity. Required for plastid ribosome biogenesis. This chain is Ribonuclease III domain-containing protein RNC1, chloroplastic, found in Zea mays (Maize).